A 1517-amino-acid polypeptide reads, in one-letter code: DNA-directed RNA polymerase subunit beta' (1517 aa).

Positions 71, 73, 86, and 89 each coordinate Zn(2+). Residues Asp-482, Asp-484, and Asp-486 each contribute to the Mg(2+) site. Residues Cys-812, Cys-886, Cys-893, and Cys-896 each contribute to the Zn(2+) site.

The protein belongs to the RNA polymerase beta' chain family. The RNAP catalytic core consists of 2 alpha, 1 beta, 1 beta' and 1 omega subunit. When a sigma factor is associated with the core the holoenzyme is formed, which can initiate transcription. Mg(2+) is required as a cofactor. It depends on Zn(2+) as a cofactor.

It carries out the reaction RNA(n) + a ribonucleoside 5'-triphosphate = RNA(n+1) + diphosphate. Functionally, DNA-dependent RNA polymerase catalyzes the transcription of DNA into RNA using the four ribonucleoside triphosphates as substrates. The chain is DNA-directed RNA polymerase subunit beta' from Campylobacter lari (strain RM2100 / D67 / ATCC BAA-1060).